Here is a 486-residue protein sequence, read N- to C-terminus: Pentatricopeptide repeat-containing protein At2g01860 (486 aa).

The tract at residues 111 to 137 is disordered; it reads QKPDKPSRVRPLPLPQPHKLRPLGLPT. 5 PPR repeats span residues 290–321, 327–361, 362–396, 397–431, and 432–466; these read DSSVYVKMILEIAKNPDKYHLVVALLEELKKR, SQQDCTSIMKICVKLGEFELVESLFDWFKASNREP, SVVMYTTMIHSRYSEQKYREAMSVVWEMEESNCLL, DLPAYRVVIKLFVALDDLGRAMRYYSKLKEAGFSP, and TYDIYRDMISVYTASGRLTKCKEICKEVEDAGLRL.

The protein belongs to the PPR family. P subfamily.

The sequence is that of Pentatricopeptide repeat-containing protein At2g01860 (EMB975) from Arabidopsis thaliana (Mouse-ear cress).